The following is a 243-amino-acid chain: R-spondin-2 (243 aa).

The first 21 residues, 1 to 21 (MQFQLFSFALIILNCVDYSHC), serve as a signal peptide directing secretion. Disulfide bonds link C40/C46, C43/C52, C55/C74, C78/C93, C96/C104, C101/C110, C113/C124, C128/C141, C145/C187, C156/C163, and C196/C203. The FU repeat unit spans residues 90 to 134 (MNRCSRCRIENCDSCFSRDFCIKCKSGFYSLKGQCFEECPEGFAP). Residues 144 to 204 (GCEVGPWSEW…RCKMAIRHCP (61 aa)) form the TSP type-1 domain. N-linked (GlcNAc...) asparagine glycosylation is present at N160. The span at 204–224 (PGGKRTTKKKDKRNKKKKKKL) shows a compositional bias: basic residues. The interval 204 to 243 (PGGKRTTKKKDKRNKKKKKKLLERAQEQHSVVLATDRSSQ) is disordered.

This sequence belongs to the R-spondin family. Binds heparin.

The protein localises to the secreted. Activator of the canonical Wnt signaling pathway by acting as a ligand for lgr4-6 receptors. Upon binding to lgr4-6 (lgr4, lgr5 or lgr6), lgr4-6 associate with phosphorylated lrp6 and frizzled receptors that are activated by extracellular Wnt receptors, triggering the canonical Wnt signaling pathway to increase expression of target genes. Acts both in the canonical Wnt/beta-catenin-dependent pathway and in non-canonical Wnt signaling pathway. Activates neural markers and promotes muscle formation. Overexpression blocks activin, nodal and BMP4 signaling, suggesting that it may negatively regulate the TGF-beta pathway. During embryonic development, plays a crucial role in limb specification, amplifying the Wnt signaling pathway independently of LGR4-6 receptors, possibly by acting as a direct antagonistic ligand to RNF43 and ZNRF3, hence governing the number of limbs an embryo should form. This is R-spondin-2 (rspo2) from Xenopus laevis (African clawed frog).